A 428-amino-acid polypeptide reads, in one-letter code: Probable methanogen homoaconitase large subunit (428 aa).

Residues C304, C364, and C367 each contribute to the [4Fe-4S] cluster site.

This sequence belongs to the aconitase/IPM isomerase family. LeuC type 2 subfamily. Heterotetramer of 2 HacA and 2 HacB proteins.

It catalyses the reaction (2R)-homocitrate = (2R,3S)-homoisocitrate. It carries out the reaction (2R)-homocitrate = cis-homoaconitate + H2O. The enzyme catalyses (2R,3S)-homoisocitrate = cis-homoaconitate + H2O. The catalysed reaction is cis-(homo)2aconitate + H2O = (2R,3S)-iso(homo)2citrate. It catalyses the reaction cis-(homo)3aconitate + H2O = (2R,3S)-iso(homo)3citrate. The protein operates within organic acid metabolism; 2-oxosuberate biosynthesis. Component of a hydro-lyase with broad substrate specificity for cis-unsaturated tricarboxylic acids. Catalyzes both the reversible dehydration of (R)-homocitrate ((R)-2-hydroxybutane-1,2,4-tricarboxylate) to produce cis-homoaconitate ((Z)-but-1-ene-1,2,4-tricarboxylate), and its hydration to homoisocitrate ((1R,2S)-1-hydroxybutane-1,2,4-tricarboxylate). Is also able to hydrate the analogous longer chain substrates cis-homo(2)-aconitate, cis-homo(3)-aconitate. These reactions are part of the biosynthesis pathway of coenzyme B. This chain is Probable methanogen homoaconitase large subunit (hacA), found in Methanothermobacter thermautotrophicus (strain ATCC 29096 / DSM 1053 / JCM 10044 / NBRC 100330 / Delta H) (Methanobacterium thermoautotrophicum).